The sequence spans 311 residues: tRNA dimethylallyltransferase (311 aa).

19–26 (GPSGSGKS) is an ATP binding site. 21–26 (SGSGKS) serves as a coordination point for substrate. The interval 44–47 (DSLS) is interaction with substrate tRNA.

This sequence belongs to the IPP transferase family. In terms of assembly, monomer. The cofactor is Mg(2+).

The catalysed reaction is adenosine(37) in tRNA + dimethylallyl diphosphate = N(6)-dimethylallyladenosine(37) in tRNA + diphosphate. In terms of biological role, catalyzes the transfer of a dimethylallyl group onto the adenine at position 37 in tRNAs that read codons beginning with uridine, leading to the formation of N6-(dimethylallyl)adenosine (i(6)A). The chain is tRNA dimethylallyltransferase from Helicobacter pylori (strain ATCC 700392 / 26695) (Campylobacter pylori).